We begin with the raw amino-acid sequence, 78 residues long: UPF0349 protein SAHV_0934 (78 aa).

The protein belongs to the UPF0349 family.

In Staphylococcus aureus (strain Mu3 / ATCC 700698), this protein is UPF0349 protein SAHV_0934.